Consider the following 856-residue polypeptide: MEAEELIGSSVTIDSIMSKMRDIKNKINEDCTDELSLSKICADHTETVNQIMRVGNTPENWLNFLLKLEKNSSPLNDDLLNKLIGRYSQAIEVLPPDKYGQNESFARIQVRLAELKAIQEPDDARDYFQMARENCKKFAFVHVSFAQFELSQGNLKKSEQLLHKAVETGAVPLQMLETAMRNLHLQKKQLLPEEDKKSVSASTVLSAQEPFSSSLGNVQNRSISCESRGQAGAARVLYGENLPPQDAEVRHQNPFKQTHAAKRSCPFGRVPVNLLNSPDFYVKTDSSAVTQLTTRLALSSVPLPYVTCLLHLQLLALAGLAKGSGPDRDAILPGSRPRGSDSYELRGLKPIQTIYLKDSLVSNEKSSELMSDLIALKSKTDSSLTKLEETKPEIAERRPMQWQSTRKPECVFQNPAAFAPLRHVPDVTPKADKESPPISVPKWLDPKSACETPSSSSLDDYMKCFKTPVVKNDFPPACPSSTPYSQLARLQQQQQQGLSTPLQSLQISGSSSINECISVNGRIYSILKQIGSGGSSKVFQVLNEKKQINAIKYVNLEDADSQTIESYRNEIAFLNKLQQHSDKIIRLYDYEITEQYIYMVMECGNIDLNSWLKKKKSINPWERKSYWKNMLEAVHIIHQHGIVHSDLKPANFVIVDGMLKLIDFGIANQMQPDTTSIVKDSQVGTVNYMAPEAIRDMSSSRENSKIRTKVSPRSDVWSLGCILYYMTYGRTPFQHIINQVSKLHAIINPAHEIEFPEISEKDLRDVLKCCLVRNPKERISIPELLTHPYVQIQPHPGSQMARGATDEMKYVLGQLVGLNSPNSILKTAKTLYERYNCGEGQDSSSSKTFDKKRERK.

At M1 the chain carries N-acetylmethionine. T32 is subject to Phosphothreonine. Phosphoserine occurs at positions 36, 277, and 342. T380 carries the post-translational modification Phosphothreonine. Phosphoserine occurs at positions 383, 435, and 454. The region spanning 524–790 is the Protein kinase domain; it reads YSILKQIGSG…IPELLTHPYV (267 aa). Residues 530–538 and K552 contribute to the ATP site; that span reads IGSGGSSKV. Catalysis depends on D646, which acts as the Proton acceptor. Residue S820 is modified to Phosphoserine. Residues 837–856 are disordered; the sequence is CGEGQDSSSSKTFDKKRERK.

The protein belongs to the protein kinase superfamily. Ser/Thr protein kinase family. As to quaternary structure, interacts with TPR; the interactions occurs in a microtubule-independent manner. Interacts with MAD1L1 and MAD2L1. Post-translationally, autophosphorylated. In terms of tissue distribution, present in rapidly proliferating cell lines; high levels in testis, bone marrow, spleen and thymus. Low levels in brain, heart, lung and kidney.

It catalyses the reaction L-seryl-[protein] + ATP = O-phospho-L-seryl-[protein] + ADP + H(+). The enzyme catalyses L-threonyl-[protein] + ATP = O-phospho-L-threonyl-[protein] + ADP + H(+). The catalysed reaction is L-tyrosyl-[protein] + ATP = O-phospho-L-tyrosyl-[protein] + ADP + H(+). Its activity is regulated as follows. Inhibited by the ATP-competitive kinase inhibitor, SP600125. In terms of biological role, involved in mitotic spindle assembly checkpoint signaling, a process that delays anaphase until chromosomes are bioriented on the spindle, and in the repair of incorrect mitotic kinetochore-spindle microtubule attachments. Phosphorylates MAD1L1 to promote the mitotic spindle assembly checkpoint. Phosphorylates CDCA8/Borealin leading to enhanced AURKB activity at the kinetochore. Phosphorylates SKA3 at 'Ser-34' leading to dissociation of the SKA complex from microtubules and destabilization of microtubule-kinetochore attachments. Phosphorylates KNL1, KNTC1 and autophosphorylates. Phosphorylates MCRS1 which enhances recruitment of KIF2A to the minus end of spindle microtubules and promotes chromosome alignment. The sequence is that of Dual specificity protein kinase TTK (Ttk) from Mus musculus (Mouse).